The following is a 493-amino-acid chain: Galactose-1-phosphate uridylyltransferase (493 aa).

It belongs to the galactose-1-phosphate uridylyltransferase type 2 family.

It localises to the cytoplasm. It carries out the reaction alpha-D-galactose 1-phosphate + UDP-alpha-D-glucose = alpha-D-glucose 1-phosphate + UDP-alpha-D-galactose. Its pathway is carbohydrate metabolism; galactose metabolism. This is Galactose-1-phosphate uridylyltransferase from Streptococcus pneumoniae (strain Hungary19A-6).